A 384-amino-acid polypeptide reads, in one-letter code: Deoxyguanosinetriphosphate triphosphohydrolase-like protein (384 aa).

Positions 62 to 198 constitute an HD domain; sequence RLTHSLEVST…AALADDISYI (137 aa).

The protein belongs to the dGTPase family. Type 2 subfamily.

This Rickettsia rickettsii (strain Iowa) protein is Deoxyguanosinetriphosphate triphosphohydrolase-like protein.